Consider the following 466-residue polypeptide: Ribulose bisphosphate carboxylase large chain (466 aa).

N6,N6,N6-trimethyllysine is present on Lys-5. Substrate-binding residues include Asn-114 and Thr-164. Lys-166 (proton acceptor) is an active-site residue. Lys-168 is a binding site for substrate. Residues Lys-192, Asp-194, and Glu-195 each contribute to the Mg(2+) site. Lys-192 is subject to N6-carboxylysine. The active-site Proton acceptor is His-285. 3 residues coordinate substrate: Arg-286, His-318, and Ser-370.

Belongs to the RuBisCO large chain family. Type I subfamily. As to quaternary structure, heterohexadecamer of 8 large chains and 8 small chains; disulfide-linked. The disulfide link is formed within the large subunit homodimers. The cofactor is Mg(2+). In terms of processing, the disulfide bond which can form in the large chain dimeric partners within the hexadecamer appears to be associated with oxidative stress and protein turnover.

Its subcellular location is the plastid. The protein localises to the chloroplast. The enzyme catalyses 2 (2R)-3-phosphoglycerate + 2 H(+) = D-ribulose 1,5-bisphosphate + CO2 + H2O. It carries out the reaction D-ribulose 1,5-bisphosphate + O2 = 2-phosphoglycolate + (2R)-3-phosphoglycerate + 2 H(+). Functionally, ruBisCO catalyzes two reactions: the carboxylation of D-ribulose 1,5-bisphosphate, the primary event in carbon dioxide fixation, as well as the oxidative fragmentation of the pentose substrate in the photorespiration process. Both reactions occur simultaneously and in competition at the same active site. In Moringa oleifera (Horseradish tree), this protein is Ribulose bisphosphate carboxylase large chain.